The primary structure comprises 62 residues: Cytochrome c oxidase copper chaperone (62 aa).

Serine 13 carries the phosphoserine modification. Position 17 is an N6-acetyllysine (lysine 17). Cysteine 22 and cysteine 23 together coordinate Cu cation. Residues 22–62 (CCACPETKKARDACIIEKGEEHCGHLIEAHKECMRALGFKI) enclose the CHCH domain. 2 consecutive short sequence motifs (cx9C motif) follow at residues 25–35 (CPETKKARDAC) and 44–54 (CGHLIEAHKEC). 2 disulfide bridges follow: cysteine 25/cysteine 54 and cysteine 35/cysteine 44. Lysine 29 carries the N6-acetyllysine modification.

This sequence belongs to the COX17 family. Interacts with COA1. Interacts with the chaperone CHCHD4; this is important for correct folding and the formation of disulfide bonds that stabilize the structure. Acetylation by KAT8 promotes assembly of the mitochondrial respiratory chain complex IV (CIV).

The protein localises to the mitochondrion intermembrane space. The protein resides in the cytoplasm. In terms of biological role, copper metallochaperone essential for the assembly of the mitochondrial respiratory chain complex IV (CIV), also known as cytochrome c oxidase. Binds two copper ions and delivers them to the metallochaperone SCO1 which transports the copper ions to the Cu(A) site on the cytochrome c oxidase subunit II (MT-CO2/COX2). The polypeptide is Cytochrome c oxidase copper chaperone (COX17) (Sus scrofa (Pig)).